The chain runs to 306 residues: Diacylglycerol kinase (306 aa).

The region spanning 1-132 (MRKRARIIYN…VDIGKMNSRY (132 aa)) is the DAGKc domain. ATP-binding positions include 10-14 (NPTSG), T41, 67-73 (GDGTLNE), and T94. The Mg(2+) site is built by R213, D216, and Y218. E273 serves as the catalytic Proton acceptor.

The protein belongs to the diacylglycerol/lipid kinase family. In terms of assembly, homodimer. Mg(2+) serves as cofactor.

The enzyme catalyses a 1,2-diacyl-sn-glycerol + ATP = a 1,2-diacyl-sn-glycero-3-phosphate + ADP + H(+). In terms of biological role, catalyzes the phosphorylation of diacylglycerol (DAG) into phosphatidic acid. Is a key enzyme involved in the production of lipoteichoic acid by reintroducing DAG formed from the breakdown of membrane phospholipids into the phosphatidylglycerol biosynthetic pathway. The chain is Diacylglycerol kinase (dagK) from Staphylococcus carnosus (strain TM300).